The chain runs to 693 residues: Elongation factor G (693 aa).

The tr-type G domain maps to 8 to 282; it reads EKTRNIGIMA…AVIDYLPSPL (275 aa). GTP contacts are provided by residues 17–24, 81–85, and 135–138; these read AHVDAGKT, DTPGH, and NKMD.

Belongs to the TRAFAC class translation factor GTPase superfamily. Classic translation factor GTPase family. EF-G/EF-2 subfamily.

It localises to the cytoplasm. Functionally, catalyzes the GTP-dependent ribosomal translocation step during translation elongation. During this step, the ribosome changes from the pre-translocational (PRE) to the post-translocational (POST) state as the newly formed A-site-bound peptidyl-tRNA and P-site-bound deacylated tRNA move to the P and E sites, respectively. Catalyzes the coordinated movement of the two tRNA molecules, the mRNA and conformational changes in the ribosome. The chain is Elongation factor G from Streptococcus pneumoniae (strain Hungary19A-6).